The following is a 202-amino-acid chain: Protein GrpE (202 aa).

A compositionally biased stretch (polar residues) spans 1–14 (MENTQENPTSQNPT). The tract at residues 1-58 (MENTQENPTSQNPTPADEAARQAAEAASGEPQDQARQPAAAAGEQPAQAQPAGAEAAL) is disordered. The span at 21–58 (RQAAEAASGEPQDQARQPAAAAGEQPAQAQPAGAEAAL) shows a compositional bias: low complexity.

The protein belongs to the GrpE family. As to quaternary structure, homodimer.

It is found in the cytoplasm. In terms of biological role, participates actively in the response to hyperosmotic and heat shock by preventing the aggregation of stress-denatured proteins, in association with DnaK and GrpE. It is the nucleotide exchange factor for DnaK and may function as a thermosensor. Unfolded proteins bind initially to DnaJ; upon interaction with the DnaJ-bound protein, DnaK hydrolyzes its bound ATP, resulting in the formation of a stable complex. GrpE releases ADP from DnaK; ATP binding to DnaK triggers the release of the substrate protein, thus completing the reaction cycle. Several rounds of ATP-dependent interactions between DnaJ, DnaK and GrpE are required for fully efficient folding. In Paraburkholderia phymatum (strain DSM 17167 / CIP 108236 / LMG 21445 / STM815) (Burkholderia phymatum), this protein is Protein GrpE.